The primary structure comprises 382 residues: D-galactonate dehydratase (382 aa).

Asp-183 serves as a coordination point for Mg(2+). The active-site Proton donor is the His-185. 2 residues coordinate Mg(2+): Glu-209 and Glu-235. His-285 acts as the Proton acceptor in catalysis.

This sequence belongs to the mandelate racemase/muconate lactonizing enzyme family. GalD subfamily. It depends on Mg(2+) as a cofactor.

The catalysed reaction is D-galactonate = 2-dehydro-3-deoxy-D-galactonate + H2O. It participates in carbohydrate acid metabolism; D-galactonate degradation; D-glyceraldehyde 3-phosphate and pyruvate from D-galactonate: step 1/3. In terms of biological role, catalyzes the dehydration of D-galactonate to 2-keto-3-deoxy-D-galactonate. This is D-galactonate dehydratase from Escherichia fergusonii (strain ATCC 35469 / DSM 13698 / CCUG 18766 / IAM 14443 / JCM 21226 / LMG 7866 / NBRC 102419 / NCTC 12128 / CDC 0568-73).